The chain runs to 193 residues: Orotate phosphoribosyltransferase (193 aa).

Residues R85, K89, and 111–119 each bind 5-phospho-alpha-D-ribose 1-diphosphate; that span reads DDVLTTGKS. Residues T115 and R143 each coordinate orotate.

This sequence belongs to the purine/pyrimidine phosphoribosyltransferase family. PyrE subfamily. Homodimer. Mg(2+) is required as a cofactor.

It carries out the reaction orotidine 5'-phosphate + diphosphate = orotate + 5-phospho-alpha-D-ribose 1-diphosphate. The protein operates within pyrimidine metabolism; UMP biosynthesis via de novo pathway; UMP from orotate: step 1/2. Catalyzes the transfer of a ribosyl phosphate group from 5-phosphoribose 1-diphosphate to orotate, leading to the formation of orotidine monophosphate (OMP). This Pyrobaculum aerophilum (strain ATCC 51768 / DSM 7523 / JCM 9630 / CIP 104966 / NBRC 100827 / IM2) protein is Orotate phosphoribosyltransferase.